Consider the following 275-residue polypeptide: 3-methyl-2-oxobutanoate hydroxymethyltransferase (275 aa).

Residues D44 and D83 each coordinate Mg(2+). Residues 44-45 (DS), D83, and K113 each bind 3-methyl-2-oxobutanoate. E115 is a binding site for Mg(2+). E182 functions as the Proton acceptor in the catalytic mechanism.

Belongs to the PanB family. In terms of assembly, homodecamer; pentamer of dimers. Mg(2+) is required as a cofactor.

The protein localises to the cytoplasm. It carries out the reaction 3-methyl-2-oxobutanoate + (6R)-5,10-methylene-5,6,7,8-tetrahydrofolate + H2O = 2-dehydropantoate + (6S)-5,6,7,8-tetrahydrofolate. It functions in the pathway cofactor biosynthesis; (R)-pantothenate biosynthesis; (R)-pantoate from 3-methyl-2-oxobutanoate: step 1/2. Catalyzes the reversible reaction in which hydroxymethyl group from 5,10-methylenetetrahydrofolate is transferred onto alpha-ketoisovalerate to form ketopantoate. In Enterococcus faecalis (strain ATCC 700802 / V583), this protein is 3-methyl-2-oxobutanoate hydroxymethyltransferase.